A 482-amino-acid polypeptide reads, in one-letter code: Glutamate synthase [NADPH] small chain (482 aa).

The region spanning 39–72 is the 4Fe-4S ferredoxin-type domain; it reads ERANEQANRCSQCGVPFCQVHCPVSNNIPDWLKL. [4Fe-4S] cluster is bound by residues cysteine 95, cysteine 99, cysteine 105, and cysteine 109.

As to quaternary structure, aggregate of 4 catalytic active heterodimers, consisting of a large and a small subunit. Requires [4Fe-4S] cluster as cofactor.

The enzyme catalyses 2 L-glutamate + NADP(+) = L-glutamine + 2-oxoglutarate + NADPH + H(+). It participates in amino-acid biosynthesis; L-glutamate biosynthesis via GLT pathway; L-glutamate from 2-oxoglutarate and L-glutamine (NADP(+) route): step 1/1. Its pathway is energy metabolism; nitrogen metabolism. The polypeptide is Glutamate synthase [NADPH] small chain (gltD) (Azospirillum brasilense).